The sequence spans 621 residues: Chaperone protein HscA homolog (621 aa).

The protein belongs to the heat shock protein 70 family.

Functionally, chaperone involved in the maturation of iron-sulfur cluster-containing proteins. Has a low intrinsic ATPase activity which is markedly stimulated by HscB. This chain is Chaperone protein HscA homolog, found in Polynucleobacter necessarius subsp. necessarius (strain STIR1).